Reading from the N-terminus, the 142-residue chain is Large ribosomal subunit protein uL13 (142 aa).

It belongs to the universal ribosomal protein uL13 family. Part of the 50S ribosomal subunit.

Its function is as follows. This protein is one of the early assembly proteins of the 50S ribosomal subunit, although it is not seen to bind rRNA by itself. It is important during the early stages of 50S assembly. This Alteromonas mediterranea (strain DSM 17117 / CIP 110805 / LMG 28347 / Deep ecotype) protein is Large ribosomal subunit protein uL13.